Reading from the N-terminus, the 145-residue chain is Holo-[acyl-carrier-protein] synthase (145 aa).

2 residues coordinate Mg(2+): Asp-9 and Glu-59.

Belongs to the P-Pant transferase superfamily. AcpS family. Mg(2+) serves as cofactor.

The protein resides in the cytoplasm. It catalyses the reaction apo-[ACP] + CoA = holo-[ACP] + adenosine 3',5'-bisphosphate + H(+). In terms of biological role, transfers the 4'-phosphopantetheine moiety from coenzyme A to a Ser of acyl-carrier-protein. The protein is Holo-[acyl-carrier-protein] synthase of Nocardia farcinica (strain IFM 10152).